Here is a 190-residue protein sequence, read N- to C-terminus: Threonylcarbamoyl-AMP synthase (190 aa).

Residues Ser7–Gly190 form the YrdC-like domain.

It belongs to the SUA5 family. TsaC subfamily.

It localises to the cytoplasm. The catalysed reaction is L-threonine + hydrogencarbonate + ATP = L-threonylcarbamoyladenylate + diphosphate + H2O. In terms of biological role, required for the formation of a threonylcarbamoyl group on adenosine at position 37 (t(6)A37) in tRNAs that read codons beginning with adenine. Catalyzes the conversion of L-threonine, HCO(3)(-)/CO(2) and ATP to give threonylcarbamoyl-AMP (TC-AMP) as the acyladenylate intermediate, with the release of diphosphate. The chain is Threonylcarbamoyl-AMP synthase from Sodalis glossinidius (strain morsitans).